The following is a 129-amino-acid chain: Holo-[acyl-carrier-protein] synthase (129 aa).

The Mg(2+) site is built by Asp8 and Glu58.

The protein belongs to the P-Pant transferase superfamily. AcpS family. It depends on Mg(2+) as a cofactor.

The protein localises to the cytoplasm. It catalyses the reaction apo-[ACP] + CoA = holo-[ACP] + adenosine 3',5'-bisphosphate + H(+). In terms of biological role, transfers the 4'-phosphopantetheine moiety from coenzyme A to a Ser of acyl-carrier-protein. The chain is Holo-[acyl-carrier-protein] synthase from Geobacillus kaustophilus (strain HTA426).